A 159-amino-acid chain; its full sequence is MGRFIFISFGLLVVFFFLSGAKGSTCPFHWLPMYGLCYKIFDKLKTWNDAEMFCRKYKPGCHLASLHSKRDSIEFAEYISDYRKGWGNVWIGMWGRKEGLTCEWTDGSSTTYVAWKQNLTDHYLNKDLFCAEIVSYTGYRLWNKQDCKVKNAFLCQCGF.

Positions 1 to 23 are cleaved as a signal peptide; the sequence is MGRFIFISFGLLVVFFFLSGAKG. 4 cysteine pairs are disulfide-bonded: cysteine 26/cysteine 37, cysteine 54/cysteine 155, cysteine 61/cysteine 157, and cysteine 130/cysteine 147. The C-type lectin domain occupies 33–156; the sequence is MYGLCYKIFD…CKVKNAFLCQ (124 aa). The N-linked (GlcNAc...) asparagine glycan is linked to asparagine 118. The Sugar-binding motif lies at 119-121; the sequence is LTD. Ca(2+)-binding residues include aspartate 121, aspartate 127, and asparagine 143.

Belongs to the true venom lectin family. As to quaternary structure, homodimer; disulfide-linked. As to expression, expressed by the venom gland.

The protein localises to the secreted. Its function is as follows. Lectin which recognizes specific carbohydrate structures and agglutinates a variety of animal cells by binding to cell-surface glycoproteins and glycolipids. May be a calcium-dependent lectin. This chain is C-type lectin 1, found in Bitis gabonica (Gaboon adder).